The following is a 282-amino-acid chain: Bis(5'-nucleosyl)-tetraphosphatase, symmetrical (282 aa).

It belongs to the Ap4A hydrolase family.

The enzyme catalyses P(1),P(4)-bis(5'-adenosyl) tetraphosphate + H2O = 2 ADP + 2 H(+). Its function is as follows. Hydrolyzes diadenosine 5',5'''-P1,P4-tetraphosphate to yield ADP. The chain is Bis(5'-nucleosyl)-tetraphosphatase, symmetrical from Burkholderia pseudomallei (strain 668).